A 253-amino-acid polypeptide reads, in one-letter code: Flap endonuclease Xni (253 aa).

Mg(2+) is bound at residue aspartate 105. Positions 162-251 (ERHQLLDYIA…HLKLSDLRVN (90 aa)) constitute a 5'-3' exonuclease domain. Residues leucine 172, proline 181, isoleucine 183, and isoleucine 186 each contribute to the K(+) site. The tract at residues 185-190 (GIGPKS) is interaction with DNA.

The protein belongs to the Xni family. It depends on Mg(2+) as a cofactor. The cofactor is K(+).

In terms of biological role, has flap endonuclease activity. During DNA replication, flap endonucleases cleave the 5'-overhanging flap structure that is generated by displacement synthesis when DNA polymerase encounters the 5'-end of a downstream Okazaki fragment. This is Flap endonuclease Xni from Shewanella amazonensis (strain ATCC BAA-1098 / SB2B).